The chain runs to 582 residues: ATP-dependent lipid A-core flippase (582 aa).

Transmembrane regions (helical) follow at residues 16–36 (LWPT…ALIL), 64–84 (LLWM…TSYI), 153–173 (IIGL…ILVV), 253–273 (PIIQ…ASFP), and 275–295 (VMDS…IALM). Residues 28-310 (IVAGIALILN…LTNVNAQFQR (283 aa)) enclose the ABC transmembrane type-1 domain. The region spanning 342-578 (LEFRNVTFTY…HGVYAQLHKM (237 aa)) is the ABC transporter domain. 376–383 (GRSGSGKS) serves as a coordination point for ATP.

Belongs to the ABC transporter superfamily. Lipid exporter (TC 3.A.1.106) family. As to quaternary structure, homodimer.

It is found in the cell inner membrane. It catalyses the reaction ATP + H2O + lipid A-core oligosaccharideSide 1 = ADP + phosphate + lipid A-core oligosaccharideSide 2.. In terms of biological role, involved in lipopolysaccharide (LPS) biosynthesis. Translocates lipid A-core from the inner to the outer leaflet of the inner membrane. Transmembrane domains (TMD) form a pore in the inner membrane and the ATP-binding domain (NBD) is responsible for energy generation. This Salmonella choleraesuis (strain SC-B67) protein is ATP-dependent lipid A-core flippase.